The following is a 555-amino-acid chain: MIPFLLMVAFADTVLQVSAQSQPSCDSKVYCQGKLLHVVEMSRIFNDSKTFVELKMINDEQTTLENFDNFLRDTNHKRTRADLMKFVSDNFKQENEFESWTPTDFTDNPTLLSRIEDKTIRQFAQDLVKIWPTLARKVKKEVLDYPEHYSLLPVDNGFIIPGGRFTEFYYWDSYWIVEGLLLSDMHETVRGMLDNFLSIVEKYGFIPNGARVFYLNRSQPPLLTLMVSLYVSATNDMEWLAKNIRTIDTELRFWLNNRLVDVVKDGIVYKLAQYNSNSGSPRPESYYEDVTTASVFSDERDKAELYMDLKSAAESGWDFSSRWIVDEYGGTRGNLSALHTRRIIPVDLNAFLCQAFQKLSEFYQTLGDYPNATFWSKLVKIWQHSIEMVHYNRDDGIWYDWDNELSQHRRMFFPSNFAPLWSETFDSRNAEILGEMAAEYFITQNMMDYHGGIPTSLSHTGEQWDYPNAWPPMQSIIVMGLDKSGSYRAKQLARELARRWVKANLIGFRQTGEMFEKYNVEVPGQNGGGGEYVVQSGFGWTNGVVLEFINQFFTT.

Residues 1 to 16 (MIPFLLMVAFADTVLQ) form the signal peptide. N46 is a glycosylation site (N-linked (GlcNAc...) asparagine). Substrate-binding positions include R164, 171–172 (WD), and N208. An N-linked (GlcNAc...) asparagine glycan is attached at N216. Substrate contacts are provided by residues 217-219 (RSQ), 282-284 (RPE), and G316. D318 acts as the Proton donor/acceptor in catalysis. N334 and N371 each carry an N-linked (GlcNAc...) asparagine glycan. The active-site Proton donor/acceptor is the E516. E531 lines the substrate pocket.

Belongs to the glycosyl hydrolase 37 family. In terms of tissue distribution, bean-shaped accessory glands (bags).

Its subcellular location is the secreted. It catalyses the reaction alpha,alpha-trehalose + H2O = alpha-D-glucose + beta-D-glucose. The polypeptide is Trehalase (Tenebrio molitor (Yellow mealworm beetle)).